We begin with the raw amino-acid sequence, 3843 residues long: NBPF family member NBPF19 (3843 aa).

A coiled-coil region spans residues 70–130 (MLRNERQFKE…RSLNEHLQAL (61 aa)). 45 Olduvai domains span residues 165–257 (ENDN…HIIP), 258–329 (ENES…VDIG), 330–421 (RHRW…PSCP), 424–479 (SREL…LDVD), 480–572 (RIKK…RSKK), 573–665 (ERRR…PSCP), 668–723 (SREL…LDVD), 724–816 (RIKK…RSKK), 817–909 (ERRR…PSCP), 912–967 (SREL…LDVD), 968–1060 (RIKK…RSKK), 1061–1153 (ERRR…PSCP), 1156–1211 (SREL…LDVD), 1212–1304 (RIKK…RSKK), 1305–1397 (ERRR…PSCP), 1400–1455 (SREL…LDVD), 1456–1548 (RIKK…RSKK), 1549–1641 (ERRR…PSCP), 1644–1699 (SREL…LDVD), 1700–1792 (RIKK…RSKK), 1793–1885 (ERRR…PSCP), 1888–1943 (SREL…LDVD), 1944–2036 (RIKK…RSKK), 2037–2129 (ERRR…PSCP), 2132–2187 (SREL…LDVD), 2188–2280 (RIKK…RSKK), 2281–2373 (ERRR…PSCP), 2376–2431 (SREL…LDVD), 2432–2524 (RIKK…RSKK), 2525–2617 (ERRR…PSCP), 2620–2675 (SREL…LDVD), 2676–2768 (RIKK…RSKK), 2769–2861 (ERRR…PSCP), 2864–2919 (SREL…LDVD), 2920–3012 (RIKK…RSKK), 3013–3105 (ERRR…PSCP), 3108–3163 (SREL…LDVD), 3164–3256 (RIKK…RSKK), 3257–3349 (ERRR…PSCP), 3352–3407 (SREL…LDVD), 3408–3500 (RIKK…RSKK), 3501–3593 (ERRR…PSCP), 3596–3651 (SREL…LDVD), 3652–3744 (RIKK…RSKK), and 3745–3843 (ERRR…IFPQ). Disordered regions lie at residues 180 to 203 (EKVQKSSAPREMQKAEEKEVPEDS) and 249 to 295 (WEDA…EGYS). Composition is skewed to acidic residues over residues 259 to 268 (NESDDEEEEE) and 279 to 291 (ESEEEEVPQESWD). The tract at residues 559-597 (KGKGKKRRGRRSKKERRRGRKEGEEDQNPPCPRLSRELL) is disordered. Positions 560-578 (GKGKKRRGRRSKKERRRGR) are enriched in basic residues. Positions 803 to 841 (KGKGKKRRGRRSKKERRRGRKEGEEDQNPPCPRLSRELL) are disordered. The span at 804–822 (GKGKKRRGRRSKKERRRGR) shows a compositional bias: basic residues. Residues 1047–1085 (KGKGKKRRGRRSKKERRRGRKEGEEDQNPPCPRLSRELL) form a disordered region. Residues 1048–1066 (GKGKKRRGRRSKKERRRGR) show a composition bias toward basic residues. Residues 1291 to 1329 (KGKGKKRRGRRSKKERRRGRKEGEEDQNPPCPRLSRELL) form a disordered region. A compositionally biased stretch (basic residues) spans 1292–1310 (GKGKKRRGRRSKKERRRGR). The tract at residues 1535 to 1573 (KGKGKKRRGRRSKKERRRGRKEGEEDQNPPCPRLSRELL) is disordered. Residues 1536 to 1554 (GKGKKRRGRRSKKERRRGR) are compositionally biased toward basic residues. Positions 1779–1817 (KGKGKKRRGRRSKKERRRGRKEGEEDQNPPCPRLSRELL) are disordered. Residues 1780–1798 (GKGKKRRGRRSKKERRRGR) are compositionally biased toward basic residues. The segment at 2023 to 2061 (KGKGKKRRGRRSKKERRRGRKEGEEDQNPPCPRLSRELL) is disordered. Positions 2024–2042 (GKGKKRRGRRSKKERRRGR) are enriched in basic residues. Residues 2267 to 2305 (KGKGKKRRGRRSKKERRRGRKEGEEDQNPPCPRLSRELL) form a disordered region. Residues 2268–2286 (GKGKKRRGRRSKKERRRGR) show a composition bias toward basic residues. The segment at 2511-2549 (KGKGKKRRGRRSKKERRRGRKEGEEDQNPPCPRLSRELL) is disordered. Basic residues predominate over residues 2512-2530 (GKGKKRRGRRSKKERRRGR). The disordered stretch occupies residues 2755–2793 (KGKGKKRRGRRSKKERRRGRKEGEEDQNPPCPRLSRELL). Positions 2756–2774 (GKGKKRRGRRSKKERRRGR) are enriched in basic residues. The tract at residues 2999 to 3037 (KGKGKKRRGRRSKKERRRGRKEGEEDQNPPCPRLSRELL) is disordered. The segment covering 3000–3018 (GKGKKRRGRRSKKERRRGR) has biased composition (basic residues). The segment at 3243-3281 (KGKGKKRRGRRSKKERRRGRKEGEEDQNPPCPRLSRELL) is disordered. The span at 3244-3262 (GKGKKRRGRRSKKERRRGR) shows a compositional bias: basic residues. Residues 3487–3525 (KGKGKKRRGRRSKKERRRGRKEGEEDQNPPCPRLSRELL) are disordered. The segment covering 3488 to 3506 (GKGKKRRGRRSKKERRRGR) has biased composition (basic residues). The segment at 3731-3764 (KGKGKKRRGRRSKKERRRGRKEGEEDQNPPCPRL) is disordered. Residues 3732-3750 (GKGKKRRGRRSKKERRRGR) are compositionally biased toward basic residues.

The protein belongs to the NBPF family.

It localises to the cytoplasm. The chain is NBPF family member NBPF19 from Homo sapiens (Human).